The primary structure comprises 483 residues: ATP synthase subunit beta (483 aa).

169-176 (GGAGVGKT) contributes to the ATP binding site.

The protein belongs to the ATPase alpha/beta chains family. In terms of assembly, F-type ATPases have 2 components, CF(1) - the catalytic core - and CF(0) - the membrane proton channel. CF(1) has five subunits: alpha(3), beta(3), gamma(1), delta(1), epsilon(1). CF(0) has three main subunits: a(1), b(2) and c(9-12). The alpha and beta chains form an alternating ring which encloses part of the gamma chain. CF(1) is attached to CF(0) by a central stalk formed by the gamma and epsilon chains, while a peripheral stalk is formed by the delta and b chains.

It localises to the cell membrane. The catalysed reaction is ATP + H2O + 4 H(+)(in) = ADP + phosphate + 5 H(+)(out). In terms of biological role, produces ATP from ADP in the presence of a proton gradient across the membrane. The catalytic sites are hosted primarily by the beta subunits. This is ATP synthase subunit beta from Rhodococcus jostii (strain RHA1).